The sequence spans 90 residues: Small ribosomal subunit protein uS17 (90 aa).

Belongs to the universal ribosomal protein uS17 family. As to quaternary structure, part of the 30S ribosomal subunit.

In terms of biological role, one of the primary rRNA binding proteins, it binds specifically to the 5'-end of 16S ribosomal RNA. This Burkholderia thailandensis (strain ATCC 700388 / DSM 13276 / CCUG 48851 / CIP 106301 / E264) protein is Small ribosomal subunit protein uS17.